The following is a 418-amino-acid chain: Elongation factor 1-gamma 2 (418 aa).

Residues 1 to 82 (MALVLHAGSG…YVTRSKADNP (82 aa)) form the GST N-terminal domain. The GST C-terminal domain maps to 87–215 (SLIEYAHIEQ…VKQAESVPPV (129 aa)). The disordered stretch occupies residues 210 to 265 (ESVPPVQKKAPPPKEQKPKEAKKEAPKEAPKPKAVEKPEEEEEAPKPKPKNPLDLL). Positions 221–246 (PPKEQKPKEAKKEAPKEAPKPKAVEK) are enriched in basic and acidic residues. The EF-1-gamma C-terminal domain occupies 258–418 (PKNPLDLLPP…ESLLDAKCFK (161 aa)).

In terms of assembly, EF-1 is composed of four subunits: alpha, beta, delta, and gamma.

Probably plays a role in anchoring the complex to other cellular components. The sequence is that of Elongation factor 1-gamma 2 from Oryza sativa subsp. japonica (Rice).